The primary structure comprises 648 residues: MTPLLELKDIRRSYPAGDEQVEVLKGITLDIYAGEMVAIVGASGSGKSTLMNILGCLDKATSGTYRVAGQDVATLDADALAQLRREHFGFIFQRYHLLSHLTAEQNVEVPAVYAGLERKQRLLRAQELLQRLGLEDRTEYYPAQLSGGQQQRVSIARALMNGGQVILADEPTGALDSHSCEQVMAILHQLRDRGHTVIIVTHDPQVAAQAERVIEIRDGEIVRNPPAIEKVNVAGGTEPVVNTASGWRQFVSGFNEALTMAWRALAANKMRTLLTMLGIIIGIASVVSIVVVGDAAKQMVLADIRSIGTNTIDVYPGKDFGDDDPQYQQALKYDDLIAIQKQPWVASATPAVSQNLRLRYNNVDVAASANGVSGDYFNVYGMTFSEGNTFNQEQLNGRAQVVVLDSNTRRQLFPHKADVVGEVILVGNMPARVIGVAEEKQSMFGSSKVLRVWLPYSTMSGRVMGQSWLNSITVRVKEGFDSAEAEQQLTRLLSLRHGKKDFFTWNMDGVLKTVEKTTRTLQLFMTLVAVISLVVGGIGVMNIMLVSVTERTREIGIRMAVGARASDVLQQFLIEAVLVCLVGGALGITLSLLIAFTLQLFLPGWEIGFSPLALLLAFLCSTVTGILFGWLPARNAARLDPVDALARE.

One can recognise an ABC transporter domain in the interval 5–243 (LELKDIRRSY…AGGTEPVVNT (239 aa)). ATP is bound at residue 41–48 (GASGSGKS). 4 consecutive transmembrane segments (helical) span residues 273-293 (LLTM…VVVG), 523-543 (LFMT…VMNI), 576-596 (AVLV…LIAF), and 611-631 (PLAL…FGWL).

It belongs to the ABC transporter superfamily. Macrolide exporter (TC 3.A.1.122) family. As to quaternary structure, homodimer. Part of the tripartite efflux system MacAB-TolC, which is composed of an inner membrane transporter, MacB, a periplasmic membrane fusion protein, MacA, and an outer membrane component, TolC. The complex forms a large protein conduit and can translocate molecules across both the inner and outer membranes. Interacts with MacA.

Its subcellular location is the cell inner membrane. Functionally, part of the tripartite efflux system MacAB-TolC. MacB is a non-canonical ABC transporter that contains transmembrane domains (TMD), which form a pore in the inner membrane, and an ATP-binding domain (NBD), which is responsible for energy generation. Confers resistance against macrolides. This Escherichia coli O157:H7 protein is Macrolide export ATP-binding/permease protein MacB.